Consider the following 196-residue polypeptide: Rho-related protein racA (196 aa).

Residues alanine 13, glycine 15, lysine 16, threonine 17, cysteine 18, tyrosine 32, threonine 35, glycine 60, lysine 116, aspartate 118, and alanine 159 each contribute to the GTP site. Mg(2+) is bound at residue threonine 17. Short sequence motifs (switch) lie at residues 26–37 (NAFPNEYIPTVF) and 57–75 (DTAG…YPQT). Threonine 35 is a Mg(2+) binding site. Cysteine 193 bears the Cysteine methyl ester mark. Cysteine 193 carries S-geranylgeranyl cysteine lipidation. Positions 194 to 196 (LLF) are cleaved as a propeptide — removed in mature form.

It belongs to the small GTPase superfamily. Rho family. In terms of assembly, interacts (GTP-bound form) with PAK2 (via CRIB domain). It depends on Mg(2+) as a cofactor.

It localises to the cell membrane. Its subcellular location is the cytoplasm. The protein resides in the cytoskeleton. It carries out the reaction GTP + H2O = GDP + phosphate + H(+). Regulated by guanine nucleotide exchange factors (GEFs) which promote the exchange of bound GDP for free GTP, GTPase activating proteins (GAPs) which increase the GTP hydrolysis activity, and GDP dissociation inhibitors which inhibit the dissociation of the nucleotide from the GTPase. Functionally, small GTPase which cycles between active GTP-bound and inactive GDP-bound states. Involved in cytoskeleton remodeling. Plays a role in phagocytosis of bacteria and host erythrocytes. Involved in capping of surface receptors. May be involved in cytokinesis. The protein is Rho-related protein racA of Entamoeba histolytica (strain ATCC 30459 / HM-1:IMSS / ABRM).